We begin with the raw amino-acid sequence, 191 residues long: Prostaglandin-H2 D-isomerase (191 aa).

The N-terminal stretch at M1–A24 is a signal peptide. Q25 is modified (pyrrolidone carboxylic acid). The N-linked (GlcNAc...) asparagine glycan is linked to N51. The active-site Nucleophile is C65. An N-linked (GlcNAc...) asparagine glycan is attached at N78. C89 and C186 are disulfide-bonded.

It belongs to the calycin superfamily. Lipocalin family. As to quaternary structure, monomer. Post-translationally, N- and O-glycosylated. Both N-glycosylation recognition sites are almost quantitatively occupied by N-glycans of the biantennary complex type, with a considerable proportion of structures bearing a bisecting GlcNAc. N-glycan at Asn-78: dHex1Hex5HexNAc4. Agalacto structure as well as sialylated and nonsialylated oligosaccharides bearing alpha2-3- and/or alpha2-6-linked NeuNAc are present.

Its subcellular location is the rough endoplasmic reticulum. It is found in the nucleus membrane. The protein localises to the golgi apparatus. It localises to the cytoplasm. The protein resides in the perinuclear region. Its subcellular location is the secreted. The enzyme catalyses prostaglandin H2 = prostaglandin D2. Its function is as follows. Catalyzes the conversion of PGH2 to PGD2, a prostaglandin involved in smooth muscle contraction/relaxation and a potent inhibitor of platelet aggregation. Involved in a variety of CNS functions, such as sedation, NREM sleep and PGE2-induced allodynia, and may have an anti-apoptotic role in oligodendrocytes. Binds small non-substrate lipophilic molecules, including biliverdin, bilirubin, retinal, retinoic acid and thyroid hormone, and may act as a scavenger for harmful hydrophobic molecules and as a secretory retinoid and thyroid hormone transporter. Possibly involved in development and maintenance of the blood-brain, blood-retina, blood-aqueous humor and blood-testis barrier. It is likely to play important roles in both maturation and maintenance of the central nervous system and male reproductive system. Involved in PLA2G3-dependent maturation of mast cells. PLA2G3 is secreted by immature mast cells and acts on nearby fibroblasts upstream to PTDGS to synthesize PGD2, which in turn promotes mast cell maturation and degranulation via PTGDR. This Felis catus (Cat) protein is Prostaglandin-H2 D-isomerase (PTGDS).